The chain runs to 1028 residues: Endosome/lysosome-associated apoptosis and autophagy regulator family member 2 (1028 aa).

The signal sequence occupies residues 1-47; the sequence is MLLLTLRRAKGRDRGRPAGGPRRALSLPWSPAWICCWALAGCQAVWA. At 48-928 the chain is on the extracellular side; that stretch reads GDSSSSGRPL…TCETVDFWLK (881 aa). Asparagine 168 carries an N-linked (GlcNAc...) asparagine glycan. Disulfide bonds link cysteine 292–cysteine 309, cysteine 322–cysteine 345, and cysteine 325–cysteine 357. 2 N-linked (GlcNAc...) asparagine glycosylation sites follow: asparagine 404 and asparagine 690. Residues 671–876 enclose the MRH domain; that stretch reads SDCFFYHEKE…LWESAEACPL (206 aa). 4 disulfides stabilise this stretch: cysteine 673-cysteine 719, cysteine 729-cysteine 757, cysteine 826-cysteine 862, and cysteine 838-cysteine 874. A helical membrane pass occupies residues 929 to 949; sequence VGAGVGAFTAVLLVALTCYFW. Residues 950 to 1028 are Cytoplasmic-facing; the sequence is KKNQKLEYKY…QLKSSRCPNI (79 aa). Serine 1017 carries the phosphoserine modification.

It belongs to the ELAPOR family.

It is found in the cell membrane. Functions as a regulator of the BMP signaling pathway and may be involved in epidermal differentiation. This Mus musculus (Mouse) protein is Endosome/lysosome-associated apoptosis and autophagy regulator family member 2.